The primary structure comprises 163 residues: Single-stranded DNA-binding protein 2 (163 aa).

The 104-residue stretch at 1-104 (MINNVVLVGR…VVADNFQMLE (104 aa)) folds into the SSB domain. The interval 109-163 (REGGSTGSFNGGFNNNTSSSNSYSAPAQQTPNFGRDDSPFGNSNPMDISDDDLPF) is disordered. The span at 119–130 (GGFNNNTSSSNS) shows a compositional bias: low complexity. Residues 131–140 (YSAPAQQTPN) are compositionally biased toward polar residues. Positions 158 to 163 (DDDLPF) match the Important for interaction with partner proteins motif.

In terms of assembly, homotetramer.

Plays an important role in DNA replication, recombination and repair. Binds to ssDNA and to an array of partner proteins to recruit them to their sites of action during DNA metabolism. The polypeptide is Single-stranded DNA-binding protein 2 (ssb2) (Streptococcus pyogenes serotype M18 (strain MGAS8232)).